The primary structure comprises 176 residues: ATP-dependent protease subunit HslV (176 aa).

T5 is an active-site residue. Residues S161, C164, and T167 each contribute to the Na(+) site.

Belongs to the peptidase T1B family. HslV subfamily. In terms of assembly, a double ring-shaped homohexamer of HslV is capped on each side by a ring-shaped HslU homohexamer. The assembly of the HslU/HslV complex is dependent on binding of ATP.

Its subcellular location is the cytoplasm. The catalysed reaction is ATP-dependent cleavage of peptide bonds with broad specificity.. Its activity is regulated as follows. Allosterically activated by HslU binding. Functionally, protease subunit of a proteasome-like degradation complex believed to be a general protein degrading machinery. In Thermoanaerobacter sp. (strain X514), this protein is ATP-dependent protease subunit HslV.